The primary structure comprises 69 residues: NAD(P)H-quinone oxidoreductase subunit O (69 aa).

Belongs to the complex I NdhO subunit family. As to quaternary structure, NDH-1 can be composed of about 15 different subunits; different subcomplexes with different compositions have been identified which probably have different functions.

The protein resides in the cellular thylakoid membrane. The enzyme catalyses a plastoquinone + NADH + (n+1) H(+)(in) = a plastoquinol + NAD(+) + n H(+)(out). It carries out the reaction a plastoquinone + NADPH + (n+1) H(+)(in) = a plastoquinol + NADP(+) + n H(+)(out). Its function is as follows. NDH-1 shuttles electrons from an unknown electron donor, via FMN and iron-sulfur (Fe-S) centers, to quinones in the respiratory and/or the photosynthetic chain. The immediate electron acceptor for the enzyme in this species is believed to be plastoquinone. Couples the redox reaction to proton translocation, and thus conserves the redox energy in a proton gradient. Cyanobacterial NDH-1 also plays a role in inorganic carbon-concentration. The chain is NAD(P)H-quinone oxidoreductase subunit O from Acaryochloris marina (strain MBIC 11017).